Reading from the N-terminus, the 397-residue chain is P2X purinoceptor 3 (397 aa).

The Cytoplasmic portion of the chain corresponds to 1 to 20 (MNCISDFFTYETTKSVVVKS). The helical transmembrane segment at 21–43 (WTIGIINRAVQLLIISYFVGWVF) threads the bilayer. The Extracellular segment spans residues 44-322 (LHEKAYQVRD…AGKFNIIPTI (279 aa)). Residues Lys63 and Lys65 each contribute to the ATP site. Intrachain disulfides connect Cys107/Cys153, Cys116/Cys137, and Cys122/Cys147. A Mg(2+)-binding site is contributed by Glu111. Asn139 carries an N-linked (GlcNAc...) asparagine glycan. Asp158 provides a ligand contact to Mg(2+). Asp158 provides a ligand contact to Ca(2+). A glycan (N-linked (GlcNAc...) asparagine) is linked at Asn170. ATP is bound at residue Thr172. Asn194 carries an N-linked (GlcNAc...) asparagine glycan. 2 cysteine pairs are disulfide-bonded: Cys203–Cys213 and Cys247–Cys256. ATP is bound by residues Ser275, Asn279, and Arg281. The N-linked (GlcNAc...) asparagine glycan is linked to Asn290. Lys299 contacts ATP. A helical membrane pass occupies residues 323–341 (ISSVAAFTSVGVGTVLCDI). Over 342 to 397 (ILLNFLKGADHYKARKFEEVTETTLKGTASTNPVFASDQATVEKQSTDSGAYSIGH) the chain is Cytoplasmic.

The protein belongs to the P2X receptor family. In terms of assembly, homotrimer. Forms heterotrimer with P2RX2. Heterotrimeric P2RX2/3 has a ligand dose-response profile that is distinct from either homotrimeric P2RX2 or P2RX3. Selectively expressed in sensory ganglia.

The protein resides in the cell membrane. It carries out the reaction Ca(2+)(in) = Ca(2+)(out). The catalysed reaction is Na(+)(in) = Na(+)(out). Its activity is regulated as follows. Has high sensitivity to ATP. Fast activation by external ATP. Exhibits rapid desensitization. Sensitives to the ATP agonist:alpha/beta-methylene-ATP. Subject to allosteric inhibition by AF-219. Mg(2+) and Ca(2+) slow deactivation of P2RX3. In terms of biological role, extracellular ATP-activated non-selective cation channel. Plays particularly important role in sensory neurons where its activation is critical for gustatory, nociceptive responses, visceral reflexes and sensory hypersensitization. This is P2X purinoceptor 3 (P2rx3) from Rattus norvegicus (Rat).